The primary structure comprises 81 residues: Photosystem I iron-sulfur center (81 aa).

2 consecutive 4Fe-4S ferredoxin-type domains span residues 2–31 and 37–68; these read SHAV…MVPW and GQIA…IRVY. [4Fe-4S] cluster is bound by residues C11, C14, C17, C21, C48, C51, C54, and C58.

As to quaternary structure, the cyanobacterial PSI reaction center is composed of one copy each of PsaA,B,C,D,E,F,I,J,K,L,M and X, and forms trimeric complexes. [4Fe-4S] cluster is required as a cofactor.

Its subcellular location is the cellular thylakoid membrane. It catalyses the reaction reduced [plastocyanin] + hnu + oxidized [2Fe-2S]-[ferredoxin] = oxidized [plastocyanin] + reduced [2Fe-2S]-[ferredoxin]. In terms of biological role, apoprotein for the two 4Fe-4S centers FA and FB of photosystem I (PSI); essential for photochemical activity. FB is the terminal electron acceptor of PSI, donating electrons to ferredoxin. The C-terminus interacts with PsaA/B/D and helps assemble the protein into the PSI complex. Required for binding of PsaD and PsaE to PSI. PSI is a plastocyanin/cytochrome c6-ferredoxin oxidoreductase, converting photonic excitation into a charge separation, which transfers an electron from the donor P700 chlorophyll pair to the spectroscopically characterized acceptors A0, A1, FX, FA and FB in turn. The sequence is that of Photosystem I iron-sulfur center from Synechococcus sp. (strain WH7803).